A 290-amino-acid polypeptide reads, in one-letter code: Manganese efflux system protein MneS (290 aa).

Helical transmembrane passes span 15–35 (LVSIAAYLVLSAIKLIIGYLF), 39–61 (ALTADGLNNTTDIIASVAVLIGL), 82–102 (IASLIASFIMMVVGLQVLFSA), 113–133 (TPDMIAAWTAAGGAVLMLIVY), 159–179 (AFVSIGTFIGIVAAQFHLAWI), and 181–201 (TVTAFVIGLLICKTAWDIFKE).

The protein belongs to the cation diffusion facilitator (CDF) transporter (TC 2.A.4) family.

The protein resides in the cell membrane. Secondary manganese efflux system. May prevent manganese intoxication. The protein is Manganese efflux system protein MneS of Bacillus subtilis (strain 168).